A 125-amino-acid polypeptide reads, in one-letter code: Holo-[acyl-carrier-protein] synthase (125 aa).

Residues D6 and E55 each contribute to the Mg(2+) site.

The protein belongs to the P-Pant transferase superfamily. AcpS family. It depends on Mg(2+) as a cofactor.

The protein resides in the cytoplasm. It catalyses the reaction apo-[ACP] + CoA = holo-[ACP] + adenosine 3',5'-bisphosphate + H(+). Its function is as follows. Transfers the 4'-phosphopantetheine moiety from coenzyme A to a Ser of acyl-carrier-protein. In Chlorobium phaeovibrioides (strain DSM 265 / 1930) (Prosthecochloris vibrioformis (strain DSM 265)), this protein is Holo-[acyl-carrier-protein] synthase.